We begin with the raw amino-acid sequence, 585 residues long: ATP-dependent lipid A-core flippase (585 aa).

6 consecutive transmembrane segments (helical) span residues 18–38 (LWPT…ALVL), 68–88 (LMAV…FISS), 142–162 (SNAL…LAVM), 163–183 (IATS…IAVL), 255–275 (PIVQ…ATIP), and 277–297 (IMSQ…MLAM). Residues 30–313 (IAAAAALVLN…LTNVNSQFQR (284 aa)) enclose the ABC transmembrane type-1 domain. One can recognise an ABC transporter domain in the interval 345 to 581 (VSFKDVSFTY…NGAYKQLHKM (237 aa)). 379-386 (GRSGSGKS) is an ATP binding site.

It belongs to the ABC transporter superfamily. Lipid exporter (TC 3.A.1.106) family. Homodimer.

It localises to the cell inner membrane. It catalyses the reaction ATP + H2O + lipid A-core oligosaccharideSide 1 = ADP + phosphate + lipid A-core oligosaccharideSide 2.. Involved in lipopolysaccharide (LPS) biosynthesis. Translocates lipid A-core from the inner to the outer leaflet of the inner membrane. Transmembrane domains (TMD) form a pore in the inner membrane and the ATP-binding domain (NBD) is responsible for energy generation. The chain is ATP-dependent lipid A-core flippase from Mannheimia succiniciproducens (strain KCTC 0769BP / MBEL55E).